Here is a 416-residue protein sequence, read N- to C-terminus: Actin-like protein 9 (416 aa).

The segment at 1-23 (MDPNQGNPLEPQDSPEIPKPSLN) is disordered.

Belongs to the actin family. In terms of assembly, interacts with ACTL7A.

Its subcellular location is the cytoplasmic vesicle. The protein localises to the secretory vesicle. It localises to the acrosome. It is found in the cytoplasm. The protein resides in the cytoskeleton. Its subcellular location is the perinuclear theca. In terms of biological role, testis-specic protein that plays an important role in fusion of proacrosomal vesicles and perinuclear theca formation. The chain is Actin-like protein 9 (ACTL9) from Bos taurus (Bovine).